A 276-amino-acid polypeptide reads, in one-letter code: Methylesterase 17 (276 aa).

Residues 19 to 138 (PHFVLIHGMS…TDEDMKDGVP (120 aa)) enclose the AB hydrolase-1 domain. Ser95 (acyl-ester intermediate) is an active-site residue. Residues Asp225 and His252 each act as charge relay system in the active site.

Belongs to the AB hydrolase superfamily. Methylesterase family. In terms of tissue distribution, expressed in several tissues of seedlings and adult plants, with a higher relative level of expression in the seedling shoot apex and the adult stem.

The enzyme catalyses methyl (indol-3-yl)acetate + H2O = (indol-3-yl)acetate + methanol + H(+). It functions in the pathway plant hormone biosynthesis. Methylesterase that efficiently and specifically hydrolyzes methyl indole-3-acetic acid (MeIAA) to IAA (auxin). MeIAA is believed to be an inactive form of auxin that needs to be demethylated to exert a biological effect. The sequence is that of Methylesterase 17 from Arabidopsis thaliana (Mouse-ear cress).